The following is a 189-amino-acid chain: MEHKDPSQMYGTTILCIRRGNQVIIAGDGQVSLGQTVIKNSAKKIKRLANDTVITGFAGATADAFTLFERLESKLEKHPGQLLRACVELAKDWRMDKYLRRLEAMMIVADKSISLIISGNGDVLEPENGIAAIGSGGNYALAAAKALCETNERFSQNMTLEYTITTAMRIASEICIYTNNNIIIEKIED.

Thr12 is a catalytic residue. Ser172, Cys175, and Thr178 together coordinate Na(+).

Belongs to the peptidase T1B family. HslV subfamily. As to quaternary structure, a double ring-shaped homohexamer of HslV is capped on each side by a ring-shaped HslU homohexamer. The assembly of the HslU/HslV complex is dependent on binding of ATP.

The protein resides in the cytoplasm. The catalysed reaction is ATP-dependent cleavage of peptide bonds with broad specificity.. With respect to regulation, allosterically activated by HslU binding. Functionally, protease subunit of a proteasome-like degradation complex believed to be a general protein degrading machinery. The polypeptide is ATP-dependent protease subunit HslV (Ehrlichia canis (strain Jake)).